The chain runs to 226 residues: Ribonuclease 3 (226 aa).

In terms of domain architecture, RNase III spans 7-129 (LPRLCRTLGY…IIGAIYLDSD (123 aa)). Residue Glu42 participates in Mg(2+) binding. Residue Asp46 is part of the active site. Residues Asp115 and Glu118 each coordinate Mg(2+). Residue Glu118 is part of the active site. The 71-residue stretch at 156–226 (DAKTLLQEYL…AAQVLELLKK (71 aa)) folds into the DRBM domain.

The protein belongs to the ribonuclease III family. Homodimer. Mg(2+) serves as cofactor.

It localises to the cytoplasm. The enzyme catalyses Endonucleolytic cleavage to 5'-phosphomonoester.. Functionally, digests double-stranded RNA. Involved in the processing of primary rRNA transcript to yield the immediate precursors to the large and small rRNAs (23S and 16S). Processes some mRNAs, and tRNAs when they are encoded in the rRNA operon. Processes pre-crRNA and tracrRNA of type II CRISPR loci if present in the organism. In Shewanella sp. (strain W3-18-1), this protein is Ribonuclease 3.